The primary structure comprises 238 residues: MAPAPSFRGHQWTYNPVRGSCLLLLLVVSNLLLCQGISCPSCGPDMFVSLQKSLIDVFINAASLSHDFHNLSTIMFNEFDEKYAQGKLYYINATKSCHTNSFHTPEERDKAQQMNNEDLSKWTLVLLYSWNNPLYYLLLELRNMKNLSEAVISSAMEIENMSEKLQAFIESQFRKIIVPVLKMIHEVSDTWSRFSSMTFSDEDRSISEYYNLFYCLRRDSRKVDMYIKILTCRTRKTC.

The signal sequence occupies residues 1–36 (MAPAPSFRGHQWTYNPVRGSCLLLLLVVSNLLLCQG). His-66 provides a ligand contact to Zn(2+). Asn-70, Asn-92, Asn-146, and Asn-160 each carry an N-linked (GlcNAc...) asparagine glycan. Residues Cys-97 and Cys-215 are joined by a disulfide bond. Residue Asp-224 coordinates Zn(2+). Residues Cys-232 and Cys-238 are joined by a disulfide bond.

It belongs to the somatotropin/prolactin family.

The protein resides in the secreted. This Bos taurus (Bovine) protein is Chorionic somatomammotropin hormone 2 (CSH2).